The chain runs to 274 residues: Large ribosomal subunit protein uL2 (274 aa).

Residues 220 to 265 are disordered; the sequence is VRGAAMNPRDHPHGGGEGRAPRGMSTPKTKWGKPARGVKTRHNPRF. Basic and acidic residues predominate over residues 227–239; the sequence is PRDHPHGGGEGRA. Basic residues predominate over residues 249 to 262; it reads KWGKPARGVKTRHN.

The protein belongs to the universal ribosomal protein uL2 family. In terms of assembly, part of the 50S ribosomal subunit. Forms a bridge to the 30S subunit in the 70S ribosome.

Functionally, one of the primary rRNA binding proteins. Required for association of the 30S and 50S subunits to form the 70S ribosome, for tRNA binding and peptide bond formation. It has been suggested to have peptidyltransferase activity; this is somewhat controversial. Makes several contacts with the 16S rRNA in the 70S ribosome. This chain is Large ribosomal subunit protein uL2, found in Chloroflexus aurantiacus (strain ATCC 29364 / DSM 637 / Y-400-fl).